We begin with the raw amino-acid sequence, 738 residues long: 1,4-alpha-glucan branching enzyme GlgB (738 aa).

Asp417 serves as the catalytic Nucleophile. Residue Glu472 is the Proton donor of the active site.

It belongs to the glycosyl hydrolase 13 family. GlgB subfamily. As to quaternary structure, monomer.

It carries out the reaction Transfers a segment of a (1-&gt;4)-alpha-D-glucan chain to a primary hydroxy group in a similar glucan chain.. The protein operates within glycan biosynthesis; glycogen biosynthesis. In terms of biological role, catalyzes the formation of the alpha-1,6-glucosidic linkages in glycogen by scission of a 1,4-alpha-linked oligosaccharide from growing alpha-1,4-glucan chains and the subsequent attachment of the oligosaccharide to the alpha-1,6 position. This Burkholderia pseudomallei (strain 668) protein is 1,4-alpha-glucan branching enzyme GlgB.